The sequence spans 528 residues: MCSLAAGNGQGAELGPEPLELSDSGDDAGWEDEDADAEPAQGRQHTPCLFCDRLFRSAEETFSHCKLEHQFNIDGMVHKHGLEFYGYIKLINFIRLKNPTVEYMNSIYNPVPWDKDEYLKPVLEDDLLLQFDVEDLYEPVSAPFTYPNGLSENTSAVEKLKLMEARALSAEAALARAREDLQKMKQFAQDFVMNVDVRTCSSTTTIADLQEDEDGVYFSSYGHYGIHEEMLKDKVRTESYRDFIYQNPHIFKDKVVLDVGCGTGILSMFAAKAGAKKVIAVDQSEILYQAMDIIRLNKLEDTIVLIKGKIEEVSLPVEKVDVIISEWMGYFLLFESMLDSVLYAKSKYLAKGGSVYPDICTISLVAVSDVSKHADRIAFWDDVYGFNMSCMKKAVIPEAVVEVVDHKTLISDPCDIKHIDCHTTSISDLEFSSDFTLRTTKTAMCTAVAGYFDIYFEKNCHNRVVFSTGPQSTKTHWKQTIFLLEKPFPVKAGEALKGKITVHKNKKDPRSLIVTLTLNSSTQTYSLQ.

A disordered region spans residues M1–G42. N-acetylcysteine is present on C2. Phosphoserine occurs at positions 22 and 24. The span at D23–A37 shows a compositional bias: acidic residues. Residues T46–H69 form a C2H2-type zinc finger. At S169 the chain carries Phosphoserine. Residues M184–Q528 form a mediates interaction with ALDH1A1 region. Residues D214–Q528 enclose the SAM-dependent MTase PRMT-type domain. Positions 236, 260, 282, 284, 310, and 311 each coordinate S-adenosyl-L-homocysteine. Residues E326 and E335 contribute to the active site.

The protein belongs to the class I-like SAM-binding methyltransferase superfamily. Protein arginine N-methyltransferase family. As to quaternary structure, monomer and homodimer. Interacts with EPB41L3 (via FERM domain); the interaction is direct and inhibits the protein-arginine N-methyltransferase activity of PRMT3. Interacts with the 40S ribosomal protein RPS2. Interacts with ALDH1A1; the interaction is direct, inhibits ALDH1A1 aldehyde dehydrogenase activity and is independent of the methyltransferase activity of PRMT3. As to expression, ubiquitously expressed.

Its subcellular location is the cytoplasm. The protein resides in the cytosol. It localises to the nucleus. It carries out the reaction L-arginyl-[protein] + S-adenosyl-L-methionine = N(omega)-methyl-L-arginyl-[protein] + S-adenosyl-L-homocysteine + H(+). The catalysed reaction is L-arginyl-[protein] + 2 S-adenosyl-L-methionine = N(omega),N(omega)-dimethyl-L-arginyl-[protein] + 2 S-adenosyl-L-homocysteine + 2 H(+). With respect to regulation, inhibited by N-ethylmaleimide and high concentrations of zinc chloride. In terms of biological role, protein-arginine N-methyltransferase that catalyzes both the monomethylation and asymmetric dimethylation of the guanidino nitrogens of arginine residues in target proteins, and therefore falls into the group of type I methyltransferases. Catalyzes the asymmetric arginine dimethylation at multiple sites in the Arg/Gly-rich region of small ribosomal subunit protein uS5/RPS2. Also appears to methylate other ribosomal proteins. May regulate retinoic acid synthesis and signaling by inhibiting ALDH1A1 retinal dehydrogenase activity. Contributes to methylation of histone H4 'Arg-3', a specific tag for epigenetic transcriptional activation. Promotes osteogenesis. The chain is Protein arginine N-methyltransferase 3 from Rattus norvegicus (Rat).